Consider the following 256-residue polypeptide: MAGERRPLMAANWKMNKTVREAQDYMAALLPRVADLAGEVDVAVFAPFTCLSEVARMAEGSGVLAGAQNFFYEDSGAYTGEVSAPMLLDVGARASIVGHSERRELFCETDESVARKARRAVEAGLLPVVCVGETEEERDAGRMWEKVSGQVRAVVEGLGDASGGRVVFAYEPIWAIGTGKTASPEDAQDAIGRIRGLLRELRGEGFAEEARLLYGGSIKPENISEIMAQKDVDGGLVGGASLEVGSFLQLVEAARG.

Substrate is bound at residue 12–14 (NWK). H99 acts as the Electrophile in catalysis. The active-site Proton acceptor is E171. Substrate-binding positions include G177, S217, and 238–239 (GG).

The protein belongs to the triosephosphate isomerase family. In terms of assembly, homodimer.

Its subcellular location is the cytoplasm. The enzyme catalyses D-glyceraldehyde 3-phosphate = dihydroxyacetone phosphate. The protein operates within carbohydrate biosynthesis; gluconeogenesis. It participates in carbohydrate degradation; glycolysis; D-glyceraldehyde 3-phosphate from glycerone phosphate: step 1/1. Functionally, involved in the gluconeogenesis. Catalyzes stereospecifically the conversion of dihydroxyacetone phosphate (DHAP) to D-glyceraldehyde-3-phosphate (G3P). This chain is Triosephosphate isomerase, found in Rubrobacter xylanophilus (strain DSM 9941 / JCM 11954 / NBRC 16129 / PRD-1).